The sequence spans 361 residues: Peptide chain release factor 1 (361 aa).

Glutamine 237 is subject to N5-methylglutamine. Over residues 287-297 (KQQKEQSDTRK) the composition is skewed to basic and acidic residues. The segment at 287–307 (KQQKEQSDTRKNLVGSGDRSE) is disordered.

Belongs to the prokaryotic/mitochondrial release factor family. Post-translationally, methylated by PrmC. Methylation increases the termination efficiency of RF1.

The protein resides in the cytoplasm. In terms of biological role, peptide chain release factor 1 directs the termination of translation in response to the peptide chain termination codons UAG and UAA. This Francisella philomiragia subsp. philomiragia (strain ATCC 25017 / CCUG 19701 / FSC 153 / O#319-036) protein is Peptide chain release factor 1.